Here is a 639-residue protein sequence, read N- to C-terminus: 1-deoxy-D-xylulose-5-phosphate synthase (639 aa).

Residues His76 and 117–119 contribute to the thiamine diphosphate site; that span reads AHS. Asp148 provides a ligand contact to Mg(2+). Residues 149–150, Asn181, Tyr288, and Glu370 each bind thiamine diphosphate; that span reads GS. Asn181 lines the Mg(2+) pocket.

The protein belongs to the transketolase family. DXPS subfamily. Homodimer. Mg(2+) is required as a cofactor. Requires thiamine diphosphate as cofactor.

The enzyme catalyses D-glyceraldehyde 3-phosphate + pyruvate + H(+) = 1-deoxy-D-xylulose 5-phosphate + CO2. The protein operates within metabolic intermediate biosynthesis; 1-deoxy-D-xylulose 5-phosphate biosynthesis; 1-deoxy-D-xylulose 5-phosphate from D-glyceraldehyde 3-phosphate and pyruvate: step 1/1. Catalyzes the acyloin condensation reaction between C atoms 2 and 3 of pyruvate and glyceraldehyde 3-phosphate to yield 1-deoxy-D-xylulose-5-phosphate (DXP). The protein is 1-deoxy-D-xylulose-5-phosphate synthase of Leptothrix cholodnii (strain ATCC 51168 / LMG 8142 / SP-6) (Leptothrix discophora (strain SP-6)).